Reading from the N-terminus, the 201-residue chain is Inosine triphosphate pyrophosphatase (201 aa).

16–21 (TGNAKK) is an ITP binding site. Residue Glu44 participates in Mg(2+) binding. ITP is bound by residues Lys56, 72–73 (DT), Lys89, 148–151 (FGWD), Lys171, and 176–177 (HR).

Belongs to the HAM1 NTPase family. In terms of assembly, homodimer. It depends on Mg(2+) as a cofactor. The cofactor is Mn(2+).

The protein resides in the cytoplasm. The catalysed reaction is ITP + H2O = IMP + diphosphate + H(+). The enzyme catalyses dITP + H2O = dIMP + diphosphate + H(+). It carries out the reaction XTP + H2O = XMP + diphosphate + H(+). In terms of biological role, pyrophosphatase that hydrolyzes non-canonical purine nucleotides such as inosine triphosphate (ITP), deoxyinosine triphosphate (dITP) or xanthosine 5'-triphosphate (XTP) to their respective monophosphate derivatives. The enzyme does not distinguish between the deoxy- and ribose forms. Probably excludes non-canonical purines from RNA and DNA precursor pools, thus preventing their incorporation into RNA and DNA and avoiding chromosomal lesions. The chain is Inosine triphosphate pyrophosphatase from Sorghum bicolor (Sorghum).